The following is a 374-amino-acid chain: Chaperone protein DnaJ (374 aa).

The J domain occupies 5 to 70; the sequence is DYYEVLGVER…SKRAAYDQYG (66 aa). The CR-type zinc-finger motif lies at 133 to 211; sequence GTTVNIRVPT…CHGEGRVEEY (79 aa). Zn(2+)-binding residues include Cys-146, Cys-149, Cys-163, Cys-166, Cys-185, Cys-188, Cys-199, and Cys-202. 4 CXXCXGXG motif repeats span residues 146 to 153, 163 to 170, 185 to 192, and 199 to 206; these read CKPCDGSG, CPTCGGIG, CPRCHGQG, and CDSCHGEG.

Belongs to the DnaJ family. Homodimer. Requires Zn(2+) as cofactor.

It is found in the cytoplasm. Functionally, participates actively in the response to hyperosmotic and heat shock by preventing the aggregation of stress-denatured proteins and by disaggregating proteins, also in an autonomous, DnaK-independent fashion. Unfolded proteins bind initially to DnaJ; upon interaction with the DnaJ-bound protein, DnaK hydrolyzes its bound ATP, resulting in the formation of a stable complex. GrpE releases ADP from DnaK; ATP binding to DnaK triggers the release of the substrate protein, thus completing the reaction cycle. Several rounds of ATP-dependent interactions between DnaJ, DnaK and GrpE are required for fully efficient folding. Also involved, together with DnaK and GrpE, in the DNA replication of plasmids through activation of initiation proteins. The chain is Chaperone protein DnaJ from Pseudomonas fluorescens (strain ATCC BAA-477 / NRRL B-23932 / Pf-5).